The following is a 1024-amino-acid chain: Probable alpha-mannosidase At5g13980 (1024 aa).

A signal peptide spans 1–21; sequence MDLAKFLCWIVLLLGISLVES. An N-linked (GlcNAc...) asparagine glycan is attached at Asn27. Residues His46 and Asp48 each coordinate Zn(2+). N-linked (GlcNAc...) asparagine glycosylation occurs at Asn63. Residue Asp168 coordinates Zn(2+). Asn278 carries an N-linked (GlcNAc...) asparagine glycan. Residue His410 coordinates Zn(2+). The cysteines at positions 461 and 469 are disulfide-linked. N-linked (GlcNAc...) asparagine glycosylation is found at Asn465, Asn475, Asn637, Asn658, Asn733, and Asn823. Cys827 and Cys832 are disulfide-bonded.

This sequence belongs to the glycosyl hydrolase 38 family. Homodimer. It depends on Zn(2+) as a cofactor.

It carries out the reaction Hydrolysis of terminal, non-reducing alpha-D-mannose residues in alpha-D-mannosides.. Liberates mannose from p-nitrophenyl-alpha-D-mannoside in vitro. The chain is Probable alpha-mannosidase At5g13980 from Arabidopsis thaliana (Mouse-ear cress).